Here is a 180-residue protein sequence, read N- to C-terminus: Lipid droplet coating protein Cap20 (180 aa).

The protein belongs to the perilipin family. In terms of assembly, interacts with class I hydrophobin Hydr1. Interacts also with the cAMP-dependent protein kinase catalytic subunit PkaC1.

It localises to the lipid droplet. In terms of biological role, lipid droplet coating protein that regulates lipid metabolism, appressorial turgor pressure, and virulence. Mature appressoria with high turgor pressure are essential to penetrate the leaf surface. The polypeptide is Lipid droplet coating protein Cap20 (Colletotrichum siamense (Anthracnose fungus)).